We begin with the raw amino-acid sequence, 553 residues long: Solute carrier family 45 member 3 (553 aa).

11 consecutive transmembrane segments (helical) span residues 19-39 (LLVNLLTFGLEVCLAAGITYV), 52-72 (FMTMVLGIGPVLGLVCVPLLG), 88-108 (FIWALSLGILLSLFLIPRAGW), 120-140 (LELALLILGVGLLDFCGQVCF), 161-181 (YSVYAFMISLGGCLGYLLPAI), 198-218 (CLFGLLTLIFLTCVAATLLVA), 275-295 (FVAELCSWMALMTFTLFYTDF), 323-343 (MGSLGLFLQCAISLVFSLVMD), 353-373 (AVYLASVAAFPVAAGATCLSH), 382-402 (AALTGFTFSALQILPYTLASL), and 522-542 (AYMVSAAGLGLVAIYFATQVV).

This sequence belongs to the glycoside-pentoside-hexuronide (GPH) cation symporter transporter (TC 2.A.2) family. In terms of tissue distribution, prostate specific. Expressed in all prostatic glandular cells. Expressed both in normal and cancerous prostates.

The protein localises to the membrane. The enzyme catalyses sucrose(out) + H(+)(out) = sucrose(in) + H(+)(in). Functionally, proton-associated sucrose transporter. May be able to transport also glucose and fructose. This chain is Solute carrier family 45 member 3, found in Homo sapiens (Human).